We begin with the raw amino-acid sequence, 363 residues long: MSFGKFFNTAVSAWMSQEGPNSDIVLSSRIRLARNIVDFRFPTLFSSEEAKQIVALFERAFVHRPYGEAGRFELLKMSELQPIEKRVLVEKHLISPHLAEDSPFGACLLSENEEISIMINEEDHIRIQCLFPGLQLAEALEAASELDDWIEGHVNYAFDERLGYLTSCPTNVGTGLRASVMMHLPALVLTQQINRIIPAINQLGLVVRGTYGEGSEALGNIFQISNQITLGKSEEDIVADLHTIVEQLIAQERAARQALVKTLGIQLEDKVFRSYGILANCRVIDSKEAAQCLSDVRLGIDLGYIKNVSRNILNELMILTQPGFLQQYAGGVLRPEERDVRRAALIRERLRMETRRKMEGDER.

The Phosphagen kinase C-terminal domain maps to 24–255; it reads IVLSSRIRLA…EQLIAQERAA (232 aa). ATP contacts are provided by residues 27–31, histidine 92, arginine 126, 177–181, and 208–213; these read SSRIR, RASVM, and RGTYGE. The RDXXRA motif of the pArg binding pocket involved in allosteric regulation motif lies at 338-343; the sequence is RDVRRA.

Belongs to the ATP:guanido phosphotransferase family. As to quaternary structure, homodimer. Dimerization is important for full catalytic activity.

It carries out the reaction L-arginyl-[protein] + ATP = N(omega)-phospho-L-arginyl-[protein] + ADP + H(+). With respect to regulation, appears to be allosterically activated by the binding of pArg-containing polypeptides to the pArg-binding pocket localized in the C-terminal domain of McsB. Its function is as follows. Catalyzes the specific phosphorylation of arginine residues in a large number of proteins. Is part of the bacterial stress response system, where it is involved in regulating the global heat shock repressor CtsR; phosphorylates arginine residues in the winged helix-turn-helix domain of CtsR, thereby preventing its binding to DNA and consequently inducing the expression of repressed genes. Protein arginine phosphorylation has a physiologically important role and is involved in the regulation of many critical cellular processes, such as protein homeostasis, motility, competence, and stringent and stress responses, by regulating gene expression and protein activity. Acts exclusively on Arg residues, since it cannot phosphorylate Tyr, Ser, Thr, His, Asp and Lys. Has no free arginine kinase activity. The protein is Protein-arginine kinase of Geobacillus stearothermophilus (Bacillus stearothermophilus).